A 488-amino-acid chain; its full sequence is Ribulose bisphosphate carboxylase large chain (488 aa).

Substrate is bound by residues asparagine 127 and threonine 177. The active-site Proton acceptor is lysine 179. Residue lysine 181 participates in substrate binding. Mg(2+)-binding residues include lysine 205, aspartate 207, and glutamate 208. Lysine 205 is modified (N6-carboxylysine). The active-site Proton acceptor is histidine 297. Residues arginine 298, histidine 330, and serine 382 each coordinate substrate.

It belongs to the RuBisCO large chain family. Type I subfamily. As to quaternary structure, heterohexadecamer of 8 large chains and 8 small chains. Mg(2+) is required as a cofactor.

The protein localises to the plastid. It localises to the chloroplast. It carries out the reaction 2 (2R)-3-phosphoglycerate + 2 H(+) = D-ribulose 1,5-bisphosphate + CO2 + H2O. It catalyses the reaction D-ribulose 1,5-bisphosphate + O2 = 2-phosphoglycolate + (2R)-3-phosphoglycerate + 2 H(+). In terms of biological role, ruBisCO catalyzes two reactions: the carboxylation of D-ribulose 1,5-bisphosphate, the primary event in carbon dioxide fixation, as well as the oxidative fragmentation of the pentose substrate in the photorespiration process. Both reactions occur simultaneously and in competition at the same active site. The sequence is that of Ribulose bisphosphate carboxylase large chain from Pylaiella littoralis (Seaweed).